Consider the following 370-residue polypeptide: DNA primase large subunit PriL (370 aa).

[4Fe-4S] cluster-binding residues include C268, C341, C350, and C354.

Belongs to the eukaryotic-type primase large subunit family. As to quaternary structure, heterodimer of a small subunit (PriS) and a large subunit (PriL). Requires [4Fe-4S] cluster as cofactor.

Regulatory subunit of DNA primase, an RNA polymerase that catalyzes the synthesis of short RNA molecules used as primers for DNA polymerase during DNA replication. Stabilizes and modulates the activity of the small subunit, increasing the rate of DNA synthesis, and conferring RNA synthesis capability. The DNA polymerase activity may enable DNA primase to also catalyze primer extension after primer synthesis. May also play a role in DNA repair. This Archaeoglobus fulgidus (strain ATCC 49558 / DSM 4304 / JCM 9628 / NBRC 100126 / VC-16) protein is DNA primase large subunit PriL.